The chain runs to 842 residues: Alanine--tRNA ligase (842 aa).

Residues histidine 549, histidine 553, cysteine 650, and histidine 654 each coordinate Zn(2+).

Belongs to the class-II aminoacyl-tRNA synthetase family. The cofactor is Zn(2+).

It localises to the cytoplasm. The enzyme catalyses tRNA(Ala) + L-alanine + ATP = L-alanyl-tRNA(Ala) + AMP + diphosphate. Its function is as follows. Catalyzes the attachment of alanine to tRNA(Ala) in a two-step reaction: alanine is first activated by ATP to form Ala-AMP and then transferred to the acceptor end of tRNA(Ala). Also edits incorrectly charged Ser-tRNA(Ala) and Gly-tRNA(Ala) via its editing domain. The polypeptide is Alanine--tRNA ligase (Campylobacter jejuni subsp. jejuni serotype O:2 (strain ATCC 700819 / NCTC 11168)).